We begin with the raw amino-acid sequence, 306 residues long: Putative lipid kinase Sca_1050 (306 aa).

Residues 3–139 form the DAGKc domain; that stretch reads QHFHRGILFY…FDVLKVNDTY (137 aa). ATP-binding positions include Ser-44, 74-80, and Thr-101; that span reads GDGTVNE. Residues Ser-220, Asp-223, and Glu-225 each coordinate Mg(2+). Catalysis depends on Glu-281, which acts as the Proton acceptor.

The protein belongs to the diacylglycerol/lipid kinase family. Mg(2+) serves as cofactor.

Functionally, may catalyze the ATP-dependent phosphorylation of lipids other than diacylglycerol (DAG). The protein is Putative lipid kinase Sca_1050 of Staphylococcus carnosus (strain TM300).